Here is a 307-residue protein sequence, read N- to C-terminus: Polysialic acid O-acetyltransferase (307 aa).

The segment covering 1–90 (MLRLKTQDSR…LKTQDSRLKT (90 aa)) has biased composition (basic and acidic residues). Residues 1–95 (MLRLKTQDSR…SRLKTQDSFS (95 aa)) are disordered. 13 consecutive repeat copies span residues 3–9 (RLKTQDS), 10–16 (RLKTQDS), 17–23 (RLKTQDS), 24–30 (RLKTQDS), 31–37 (RLKTQDS), 38–44 (RLKTQDS), 45–51 (RLKTQDS), 52–58 (RLKTQDS), 59–65 (RLKTQDS), 66–72 (RLKTQDS), 73–79 (RLKTQDS), 80–86 (RLKTQDS), and 87–93 (RLKTQDS). The 13 X 7 AA tandem repeat of RLKTQDS encoded by a 7 nucleotide repeat stretch occupies residues 3-93 (RLKTQDSRLK…QDSRLKTQDS (91 aa)). Acetyl-CoA contacts are provided by residues 208–210 (DGH), R237, K243, K261, and K278.

Belongs to the transferase hexapeptide repeat family. As to quaternary structure, homotrimer. Hexamer formed by two homotrimers.

It carries out the reaction [N-acetyl-alpha-D-neuraminosyl-(2-&gt;8)](n) + n acetyl-CoA = [N,O(9)-diacetyl-alpha-D-neuraminosyl-(2-&gt;8)](n) + n CoA. The enzyme catalyses [N-acetyl-alpha-D-neuraminosyl-(2-&gt;8)](n) + n acetyl-CoA = [O(7),N-diacetyl-alpha-D-neuraminosyl-(2-&gt;8)](n) + n CoA. In terms of biological role, catalyzes the O-acetylation of capsular polymeric sialic acid. Shows high substrate specificity toward polymers of sialic acid that contains a large number of residues. The chain is Polysialic acid O-acetyltransferase from Escherichia coli O1:K1 / APEC.